The sequence spans 351 residues: NAD-dependent protein deacetylase SIR2rp1 (351 aa).

The Deacetylase sirtuin-type domain maps to 10 to 325; it reads HVVGEPTFEG…RSFAQALGFG (316 aa). NAD(+) contacts are provided by residues 37-57 and 122-125; these read GAGI…TGLY and QNID. H142 functions as the Proton acceptor in the catalytic mechanism. Residues C150, C153, C174, and C177 each coordinate Zn(2+). Residues 213–215 and 238–240 contribute to the NAD(+) site; these read GTS and NLE. The segment at 260-284 is disordered; it reads SSYRLSTGNGNGSKISSGDSSNSSS. Residues 265-284 are compositionally biased toward low complexity; that stretch reads STGNGNGSKISSGDSSNSSS. Position 311 (C311) interacts with NAD(+).

This sequence belongs to the sirtuin family. Class I subfamily. Zn(2+) serves as cofactor.

The protein resides in the nucleus. It is found in the chromosome. Its subcellular location is the telomere. It carries out the reaction N(6)-acetyl-L-lysyl-[protein] + NAD(+) + H2O = 2''-O-acetyl-ADP-D-ribose + nicotinamide + L-lysyl-[protein]. In terms of biological role, NAD-dependent protein deacetylase, which is involved in repression of RNA polymerase I-mediated expression immediately adjacent to telomeres. It is however not involved in antigenic variation and subtelomeric variant surface glycoprotein (VSG) gene silencing. Plays a role in DNA damage response. Also has ADP-ribosylation activity in vitro. This is NAD-dependent protein deacetylase SIR2rp1 (SIR2rp1) from Trypanosoma brucei brucei (strain 927/4 GUTat10.1).